Consider the following 338-residue polypeptide: Methionine synthase (338 aa).

3 residues coordinate Zn(2+): His211, Cys213, and Cys294.

This sequence belongs to the archaeal MetE family. Zn(2+) is required as a cofactor.

It functions in the pathway amino-acid biosynthesis; L-methionine biosynthesis via de novo pathway. Functionally, catalyzes the transfer of a methyl group to L-homocysteine resulting in methionine formation. The physiological methyl donor is unknown. The sequence is that of Methionine synthase from Sulfurisphaera tokodaii (strain DSM 16993 / JCM 10545 / NBRC 100140 / 7) (Sulfolobus tokodaii).